The sequence spans 101 residues: Venom protein 214 (101 aa).

The signal sequence occupies residues 1-16 (MIRYVLVIITCFLVAA).

In terms of processing, contains 3 disulfide bonds. In terms of tissue distribution, expressed by the venom gland.

It is found in the secreted. This is Venom protein 214 from Lychas mucronatus (Chinese swimming scorpion).